A 239-amino-acid polypeptide reads, in one-letter code: Cysteine-rich venom protein kaouthin-1 (239 aa).

The signal sequence occupies residues 1–18 (MIAFSLLCLAAVLRQSFG). The SCP domain occupies 37–165 (VDLHNSLRRR…AWSYFYVCQY (129 aa)). 8 cysteine pairs are disulfide-bonded: cysteine 74–cysteine 152, cysteine 91–cysteine 166, cysteine 147–cysteine 163, cysteine 185–cysteine 192, cysteine 188–cysteine 197, cysteine 201–cysteine 234, cysteine 210–cysteine 228, and cysteine 219–cysteine 232. Residues 201–234 (CTIYNKLTNCDSLLKQGSCQDDWIKSNCPASCFC) enclose the ShKT domain.

It belongs to the CRISP family. Expressed by the venom gland.

It is found in the secreted. Its function is as follows. Inhibits calcium-activated potassium channels (KCa), voltage-gated potassium channel (Kv), and the calcium release channel/ryanodine receptor (RyR). The protein is Cysteine-rich venom protein kaouthin-1 of Naja kaouthia (Monocled cobra).